Consider the following 377-residue polypeptide: UDP-N,N'-diacetylbacillosamine 2-epimerase (hydrolyzing) (377 aa).

This sequence belongs to the UDP-N-acetylglucosamine 2-epimerase family.

The catalysed reaction is UDP-N,N'-diacetylbacillosamine + H2O = 2,4-diacetamido-2,4,6-trideoxy-alpha-D-mannopyranose + UDP + H(+). Functionally, involved in biosynthesis of legionaminic acid (5,7-diamino-3,5,7,9-tetradeoxy-D-glycero-D-galacto-non-2-ulosonic acid)(Leg), a sialic acid-like derivative that is incorporated into virulence-associated cell surface glycoconjugates such as lipopolysaccharide (LPS) which could be a key determinant in the ability of L.pneumophila to inhibit the fusion of phagosomes with lysosomes. LPS contains a majority alpha2,4-linked homomer of legionaminic acid. Catalyzes the conversion of UDP-N,N'-diacetylbacillosamine (Bac2Ac4Ac) into 2,4-diacetamido-2,4,6-trideoxymannose and UDP. This is UDP-N,N'-diacetylbacillosamine 2-epimerase (hydrolyzing) from Legionella pneumophila subsp. pneumophila (strain Philadelphia 1 / ATCC 33152 / DSM 7513).